We begin with the raw amino-acid sequence, 273 residues long: Exosome complex component Rrp42 (273 aa).

This sequence belongs to the RNase PH family. Rrp42 subfamily. As to quaternary structure, component of the archaeal exosome complex. Forms a hexameric ring-like arrangement composed of 3 Rrp41-Rrp42 heterodimers. The hexameric ring associates with a trimer of Rrp4 and/or Csl4 subunits.

The protein localises to the cytoplasm. Functionally, non-catalytic component of the exosome, which is a complex involved in RNA degradation. Contributes to the structuring of the Rrp41 active site. This Thermococcus gammatolerans (strain DSM 15229 / JCM 11827 / EJ3) protein is Exosome complex component Rrp42.